The sequence spans 130 residues: Small ribosomal subunit protein uS9 (130 aa).

The protein belongs to the universal ribosomal protein uS9 family.

The protein is Small ribosomal subunit protein uS9 of Streptococcus suis (strain 98HAH33).